The following is a 401-amino-acid chain: Phosrestin-1 (401 aa).

It belongs to the arrestin family. Inner and outer segments, and the inner plexiform regions of the retina.

Its function is as follows. Undergoes light-induced phosphorylation, probably plays an important role in the photoreceptor transduction. The sequence is that of Phosrestin-1 (Arr2) from Drosophila miranda (Fruit fly).